The chain runs to 356 residues: MRRELLLEKIEEYKAIMPWFVLDYYQSKLSVPYSFTTLYEYLKEYKRFFDWLIDSGISDAPRIADIKLDVLEHLTKKDMESFILYLRERPSLNTYSTKSGVSQTTINRTLSALSSLYKYLTEEVENDQGEPYFYRNVMKKVATKKKKETLASRAENIKQKLFLGDETMEFLDYVDCEYENKLSNRAKSSFQKNKERDLAIIALLLASGVRLSEAVNLDLKDVNLKMMVIEVTRKGGKRDSVNVASFAKPYLEHYLEIRQKRYKADKQDQAFFLTEYRGVPNRIDASSIEKMVGKYSQDFKIRVTPHKLRHTLATRLYDATKSQVLVSHQLGHASTQVTDLYTHIVNDEQKNALDKL.

Positions 16-121 (IMPWFVLDYY…ALSSLYKYLT (106 aa)) constitute a Core-binding (CB) domain. In terms of domain architecture, Tyr recombinase spans 169–354 (EFLDYVDCEY…VNDEQKNALD (186 aa)). Residues Arg-210, Lys-234, His-306, Arg-309, and His-332 contribute to the active site. Catalysis depends on Tyr-341, which acts as the O-(3'-phospho-DNA)-tyrosine intermediate.

This sequence belongs to the 'phage' integrase family. XerS subfamily.

The protein localises to the cytoplasm. FtsK is required for recombination. Its function is as follows. Site-specific tyrosine recombinase, which acts by catalyzing the cutting and rejoining of the recombining DNA molecules. Essential to convert dimers of the bacterial chromosome into monomers to permit their segregation at cell division. The polypeptide is Tyrosine recombinase XerS (Streptococcus uberis (strain ATCC BAA-854 / 0140J)).